A 420-amino-acid polypeptide reads, in one-letter code: Histidine--tRNA ligase (420 aa).

This sequence belongs to the class-II aminoacyl-tRNA synthetase family. In terms of assembly, homodimer.

The protein resides in the cytoplasm. It carries out the reaction tRNA(His) + L-histidine + ATP = L-histidyl-tRNA(His) + AMP + diphosphate + H(+). The protein is Histidine--tRNA ligase of Clostridioides difficile (strain 630) (Peptoclostridium difficile).